A 126-amino-acid chain; its full sequence is MELGAGGVVFNAKREVLLLRDRMGFWVFPKGHPEPGESLEEAAVREVWEETGVRAEVLLPLYPTRYVNPKGVEREVHWFLMRGEGAPRLEEGMTGAGWFSPEEARALLAFPEDLGLLEVALERLPL.

Residues Met-1–Leu-121 enclose the Nudix hydrolase domain. Substrate-binding positions include Asp-21–Met-23 and Lys-30–His-32. Positions Gly-31–Gly-52 match the Nudix box motif. The Mg(2+) site is built by Glu-46 and Glu-50. Residues Tyr-66–Asn-68, Arg-74, and Glu-112 each bind substrate.

Belongs to the Nudix hydrolase family. Monomer. The cofactor is Mg(2+).

The enzyme catalyses P(1),P(6)-bis(5'-adenosyl) hexaphosphate + H2O = 2 ATP + 2 H(+). It catalyses the reaction P(1),P(5)-bis(5'-adenosyl) pentaphosphate + H2O = ADP + ATP + 2 H(+). The catalysed reaction is P(1),P(4)-bis(5'-adenosyl) tetraphosphate + H2O = AMP + ATP + 2 H(+). Its activity is regulated as follows. Strongly inhibited by fluoride ions. Specifically hydrolyzes (di)adenosine polyphosphates but not ATP or diadenosine triphosphate, generating ATP as the product. Diadenosine hexaphosphate (Ap6A) is the preferred substrate and hydrolysis yields 2 ATP. It is the only enzyme that symmetrically hydrolyzes Ap6A. It also hydrolyzes diadenosine pentaphosphate (Ap5A), diadenosine tetraphosphate (Ap4A) and adenosine tetraphosphate (p4A). This is Diadenosine hexaphosphate hydrolase from Thermus thermophilus.